Consider the following 1073-residue polypeptide: MLSFLTEVTGAIAQTSARRPIQFMVVPALLASIAYLSIIDDYIPEHIKSSSGSSGISYYHPYTSSHYKSQPDLDKWTAIDKEHINDDIYTQANQISVIPLRFRRFQDVVPNVPNAIHISDNEQILIVPTDQIENSLDQLQEITNNGITWKARNNDKLAKYYDYIRYGLNKVQDAIQHAENFDILLIFVAYLGMWYALIKVFVDMRKIGSKFWLAFSTLTSSTFAFLLALLVSNKFLHTKVSLLSLSEGIPFLVSVIGFKHKVSIATIVANSSTASPEDVPHVVGKAVSSHCLSMLRDHLVVIGGLLSCAIYAHHLTGLRNFCILSSLILSFDLILVYTFFSAILGLKVEINRARRTEDLQNALEEEGISSLVAARVAEQSATIEHPNEHNFFKSNNSSIAYFKVIMSLGFFAFHAFWLGSSWLYSTTDGGESFSRFSFLSNIPTLSQDISQQIPIGRKGTVVTILPTIFFMPSGFMVQLEDFIYLVLSKFSSAIRDSIISKFLVFGFALSIVTNVYFLNAARYQVSATHKLIEKEISRPQDSSVTATTTTTATGTTSSGAATSKTIGNNKGLKSVQEIPDNEDESSDEELEIKAPVKVLPLEECVKVLKEGKVKTLSNDEVSSLVVGGKLPLYALEKQLADNKRAVIVRRKAIAKLANAPVLDTNRLPYAHYDYDRVFGACCENVIGYMPLPVGVAGPLIIDEKPYHIPMATTEGCLVASTMRGCKAINAGGGVETVLTRDGMTRGPCVRFPTLKRAGAAKLWIDSEQGQATIKKAFNSTSRFARLQHIQTALAGTSLFIRFRTTTGDAMGMNMISKGVEYSLKYMVEECGWDDMEIVSVSGNYCTDKKPAAINWIEGRGKSIVAAARIPADVVTKVLKSDVDALVELNISKNLVGSAMAGSVGGFNAHAANLVTAVYLACGQDPAQNVESSNCITLMEKDKETGDLNVSVSMPSIEVGTIGGGTILEPQGAMLDLLGVRGPHPTNPGANAQQLAKIVASAVLAAELSLCSALAAGHLVQSHMQHNRSKAPAAGATTTTTPAITDSKASNGSIASNGKDLKRLEEGSVTCIKS.

Helical transmembrane passes span 23–43 (FMVVPALLASIAYLSIIDDYI), 181–201 (FDILLIFVAYLGMWYALIKVF), 211–231 (FWLAFSTLTSSTFAFLLALLV), 298–318 (HLVVIGGLLSCAIYAHHLTGL), 326–346 (SLILSFDLILVYTFFSAILGL), 399–419 (IAYFKVIMSLGFFAFHAFWLG), 459–479 (GTVVTILPTIFFMPSGFMVQL), and 498–518 (IISKFLVFGFALSIVTNVYFL). The SSD domain occupies 182-346 (DILLIFVAYL…YTFFSAILGL (165 aa)). A compositionally biased stretch (low complexity) spans 542–565 (SSVTATTTTTATGTTSSGAATSKT). Positions 542–589 (SSVTATTTTTATGTTSSGAATSKTIGNNKGLKSVQEIPDNEDESSDEE) are disordered. Positions 579-589 (PDNEDESSDEE) are enriched in acidic residues. The active-site Charge relay system is Glu714. 720–726 (STMRGCK) contributes to the CoA binding site. NADP(+) contacts are provided by residues 781–783 (SRF) and 808–816 (DAMGMNMIS). The active-site Charge relay system is the Lys848. 877-879 (VLK) provides a ligand contact to CoA. The active-site Charge relay system is Asp924. Residues 997–1017 (IVASAVLAAELSLCSALAAGH) form a helical membrane-spanning segment. Residue 1021–1022 (SH) participates in CoA binding. His1022 functions as the Proton donor in the catalytic mechanism. Positions 1025–1056 (HNRSKAPAAGATTTTTPAITDSKASNGSIASN) are disordered. Residue 1026 to 1027 (NR) participates in NADP(+) binding. The segment covering 1030–1042 (APAAGATTTTTPA) has biased composition (low complexity). The segment covering 1046–1055 (SKASNGSIAS) has biased composition (polar residues).

Belongs to the HMG-CoA reductase family.

It is found in the endoplasmic reticulum membrane. It catalyses the reaction (R)-mevalonate + 2 NADP(+) + CoA = (3S)-3-hydroxy-3-methylglutaryl-CoA + 2 NADPH + 2 H(+). Its pathway is metabolic intermediate biosynthesis; (R)-mevalonate biosynthesis; (R)-mevalonate from acetyl-CoA: step 3/3. HMG-CoA reductase; part of the first module of ergosterol biosynthesis pathway that includes the early steps of the pathway, conserved across all eukaryotes, and which results in the formation of mevalonate from acetyl-coenzyme A (acetyl-CoA). HMG1 catalyzes the reduction of hydroxymethylglutaryl-CoA (HMG-CoA) to mevalonate. The first module starts with the action of the cytosolic acetyl-CoA acetyltransferase ERG10 that catalyzes the formation of acetoacetyl-CoA. The hydroxymethylglutaryl-CoA synthase ERG13 then condenses acetyl-CoA with acetoacetyl-CoA to form HMG-CoA. The 3-hydroxy-3-methylglutaryl-coenzyme A (HMG-CoA) reductase HMG1 finally reduces HMG-CoA to produce mevalonate. The chain is 3-hydroxy-3-methylglutaryl-coenzyme A reductase 1 from Candida albicans (strain SC5314 / ATCC MYA-2876) (Yeast).